Consider the following 396-residue polypeptide: Flavohemoprotein (396 aa).

The Globin domain occupies 1 to 136 (MLDNQTIATV…LADIFINREE (136 aa)). Residue histidine 85 participates in heme b binding. Residues tyrosine 95 and glutamate 135 each act as charge relay system in the active site. The interval 147 to 396 (GGWRGLRPFR…YECFGPHKVI (250 aa)) is reductase. Residues 150 to 255 (RGLRPFRINR…TAPRGDFFLD (106 aa)) form the FAD-binding FR-type domain. FAD-binding positions include tyrosine 188 and 204–207 (RQYS). Residue 268–273 (GVGLTP) coordinates NADP(+). 389-392 (CFGP) lines the FAD pocket.

It belongs to the globin family. Two-domain flavohemoproteins subfamily. The protein in the C-terminal section; belongs to the flavoprotein pyridine nucleotide cytochrome reductase family. It depends on heme b as a cofactor. FAD is required as a cofactor.

It catalyses the reaction 2 nitric oxide + NADPH + 2 O2 = 2 nitrate + NADP(+) + H(+). It carries out the reaction 2 nitric oxide + NADH + 2 O2 = 2 nitrate + NAD(+) + H(+). Is involved in NO detoxification in an aerobic process, termed nitric oxide dioxygenase (NOD) reaction that utilizes O(2) and NAD(P)H to convert NO to nitrate, which protects the bacterium from various noxious nitrogen compounds. Therefore, plays a central role in the inducible response to nitrosative stress. The chain is Flavohemoprotein from Photorhabdus laumondii subsp. laumondii (strain DSM 15139 / CIP 105565 / TT01) (Photorhabdus luminescens subsp. laumondii).